The sequence spans 158 residues: NAD(P)H-quinone oxidoreductase subunit J, chloroplastic (158 aa).

This sequence belongs to the complex I 30 kDa subunit family. NDH is composed of at least 16 different subunits, 5 of which are encoded in the nucleus.

The protein localises to the plastid. The protein resides in the chloroplast thylakoid membrane. The enzyme catalyses a plastoquinone + NADH + (n+1) H(+)(in) = a plastoquinol + NAD(+) + n H(+)(out). It catalyses the reaction a plastoquinone + NADPH + (n+1) H(+)(in) = a plastoquinol + NADP(+) + n H(+)(out). NDH shuttles electrons from NAD(P)H:plastoquinone, via FMN and iron-sulfur (Fe-S) centers, to quinones in the photosynthetic chain and possibly in a chloroplast respiratory chain. The immediate electron acceptor for the enzyme in this species is believed to be plastoquinone. Couples the redox reaction to proton translocation, and thus conserves the redox energy in a proton gradient. This Fagopyrum esculentum subsp. ancestrale (Wild buckwheat) protein is NAD(P)H-quinone oxidoreductase subunit J, chloroplastic.